The sequence spans 53 residues: Sec-independent protein translocase protein TatA (53 aa).

The chain crosses the membrane as a helical span at residues 1-21; sequence MGMSFSHLLIVLLIIFVLFGA.

It belongs to the TatA/E family. As to quaternary structure, the Tat system comprises two distinct complexes: a TatABC complex, containing multiple copies of TatA, TatB and TatC subunits, and a separate TatA complex, containing only TatA subunits. Substrates initially bind to the TatABC complex, which probably triggers association of the separate TatA complex to form the active translocon.

It localises to the cell inner membrane. Its function is as follows. Part of the twin-arginine translocation (Tat) system that transports large folded proteins containing a characteristic twin-arginine motif in their signal peptide across membranes. TatA could form the protein-conducting channel of the Tat system. This is Sec-independent protein translocase protein TatA from Rickettsia typhi (strain ATCC VR-144 / Wilmington).